The following is a 487-amino-acid chain: WRKY transcription factor 1 (487 aa).

Residues 69-104 (QSEVDVASPVSEKAPKVSESSGALSLQSGSEGNSPF) form a disordered region. Ser76 carries the post-translational modification Phosphoserine. Over residues 86 to 101 (SESSGALSLQSGSEGN) the composition is skewed to polar residues. The WRKY 1 DNA-binding region spans 105-169 (IREKVMEDGY…YFGEHDHPKP (65 aa)). The Zn(2+) site is built by Cys136, Cys141, His164, and His166. The segment at 255 to 287 (SSRITGDNTHKDYNSPTAKRRKKGGNIELSPVE) is disordered. Positions 273-277 (KRRKK) match the Nuclear localization signal motif. The segment at residues 301–366 (TLFDIVNDGY…YEGKHDHDMP (66 aa)) is a DNA-binding region (WRKY 2). 4 residues coordinate Zn(2+): Cys332, Cys337, His361, and His363. The interval 380-487 (EVDDKEGDAN…QKPKTEPAQS (108 aa)) is disordered. A compositionally biased stretch (polar residues) spans 390 to 401 (KTPQSSTLQSIT). Basic and acidic residues-rich tracts occupy residues 429-462 (LDEK…DDKT) and 476-487 (EEQKPKTEPAQS).

The protein belongs to the WRKY group I family. As to expression, expressed to similar levels in root and flower, to a somewhat lower level in stem and to low levels in leaf and siliques.

The protein localises to the nucleus. Its function is as follows. Transcription factor. Binds to a 5'-CGTTGACCGAG-3' consensus core sequence which contains a W box, a frequently occurring elicitor-responsive cis-acting element. The sequence is that of WRKY transcription factor 1 from Arabidopsis thaliana (Mouse-ear cress).